We begin with the raw amino-acid sequence, 339 residues long: Putative zinc metalloprotease CA_C1796 (339 aa).

A Zn(2+)-binding site is contributed by His20. Glu21 is a catalytic residue. A Zn(2+)-binding site is contributed by His24. A run of 3 helical transmembrane segments spans residues 91–113 (LSIVIAGPIMNLILAAVLFCIVG), 275–297 (QLGVMNLLPIPALDGGFVFLFLF), and 310–330 (VGFVNTIGFALLMILMIVVTI). The 79-residue stretch at 99-177 (IMNLILAAVL…GIKLALKNNG (79 aa)) folds into the PDZ domain.

The protein belongs to the peptidase M50B family. It depends on Zn(2+) as a cofactor.

It localises to the cell membrane. This chain is Putative zinc metalloprotease CA_C1796, found in Clostridium acetobutylicum (strain ATCC 824 / DSM 792 / JCM 1419 / IAM 19013 / LMG 5710 / NBRC 13948 / NRRL B-527 / VKM B-1787 / 2291 / W).